The following is a 1682-amino-acid chain: Cilia- and flagella-associated protein 43 (1682 aa).

WD repeat units follow at residues 168 to 207 (NPGM…QEHH), 262 to 305 (PKDD…VTVL), 315 to 354 (DGAP…YQVK), 358 to 397 (EFDG…PLDK), 488 to 527 (LSQS…SFQI), and 697 to 738 (SHQG…ANIA). The segment at 767–790 (RESTNEQQEETTESQKHLNSDSSE) is disordered. 2 coiled-coil regions span residues 926 to 960 (KERT…VEVQ) and 1171 to 1223 (SEDE…HLKR).

The protein belongs to the CFAP43 family. In terms of tissue distribution, expressed in testis. Expressed in the lung, brain, oviduct and nasal cavity.

It is found in the cell projection. The protein resides in the cilium. Its subcellular location is the flagellum. The protein localises to the cytoplasm. It localises to the cytoskeleton. It is found in the flagellum axoneme. The protein resides in the cilium axoneme. Flagellar protein involved in sperm flagellum axoneme organization and function. Involved in the regulation of the beating frequency of motile cilia on the epithelial cells of the respiratory tract. This Mus musculus (Mouse) protein is Cilia- and flagella-associated protein 43.